Here is a 489-residue protein sequence, read N- to C-terminus: MSGQFTISDLNRLYQRIIYRNERLKKFLKDPALSSSFEMKYAQRLLQEAVDNLIQNGKSGVVPEKDARGRLLKSLSDILKGKQGRFRQYLLGKRVDYSGRSVIVVGPRLRLHECGIPKEMALVLYSPFLIKRILNEKLADTYLSAKKLIRTNPLLVSQLLREIMKSCPVLLNRAPTLHRLGFQAFQPKLVDGKAILLHPLVCPAFNADFDGDQMAVHVPITFEARAEAWKLMLARNNLLSPATGEPLILPSQDMVLGCYYLTTNCAEKWSKLKKGSGMYFHNIHEVLKAYNQHLIHLHAVIWVNIQGHLETANNIEQPLEIRIPLNQKYFYSQKGSYTALAGRPWQLLLREDAYSSNGLIAEANAGNLPQINVAEGEVNKNILDLRYLNLNYMEIYSKTHNLLNVNHSTLVAQRGQIKDNIHLPQLTTQIIRTTPGKILFNIIVKNAIEKRPKLLSKSNFKGGFIKNKLVNAIDQEIDNYFIRKNTALS.

Residues aspartate 208, aspartate 210, and aspartate 212 each contribute to the Mg(2+) site.

This sequence belongs to the RNA polymerase beta' chain family. RpoC1 subfamily. In plastids the minimal PEP RNA polymerase catalytic core is composed of four subunits: alpha, beta, beta', and beta''. When a (nuclear-encoded) sigma factor is associated with the core the holoenzyme is formed, which can initiate transcription. Mg(2+) is required as a cofactor.

It localises to the plastid. Its subcellular location is the chloroplast. It catalyses the reaction RNA(n) + a ribonucleoside 5'-triphosphate = RNA(n+1) + diphosphate. Functionally, DNA-dependent RNA polymerase catalyzes the transcription of DNA into RNA using the four ribonucleoside triphosphates as substrates. The polypeptide is DNA-directed RNA polymerase subunit beta' C-terminal section (rpoC1B) (Chlamydomonas reinhardtii (Chlamydomonas smithii)).